A 341-amino-acid chain; its full sequence is Ketol-acid reductoisomerase (NADP(+)) (341 aa).

Residues 1 to 182 (MTELFYDDDA…GGTRAGVIKT (182 aa)) enclose the KARI N-terminal Rossmann domain. Residues 25–28 (YGSQ), S51, S53, and 83–86 (DQVQ) contribute to the NADP(+) site. H108 is a catalytic residue. G134 lines the NADP(+) pocket. The region spanning 183–328 (TFTEETETDL…RELRKLFSWI (146 aa)) is the KARI C-terminal knotted domain. Mg(2+)-binding residues include D191, E195, E227, and E231. Residue S252 coordinates substrate.

This sequence belongs to the ketol-acid reductoisomerase family. The cofactor is Mg(2+).

It carries out the reaction (2R)-2,3-dihydroxy-3-methylbutanoate + NADP(+) = (2S)-2-acetolactate + NADPH + H(+). The catalysed reaction is (2R,3R)-2,3-dihydroxy-3-methylpentanoate + NADP(+) = (S)-2-ethyl-2-hydroxy-3-oxobutanoate + NADPH + H(+). Its pathway is amino-acid biosynthesis; L-isoleucine biosynthesis; L-isoleucine from 2-oxobutanoate: step 2/4. It functions in the pathway amino-acid biosynthesis; L-valine biosynthesis; L-valine from pyruvate: step 2/4. In terms of biological role, involved in the biosynthesis of branched-chain amino acids (BCAA). Catalyzes an alkyl-migration followed by a ketol-acid reduction of (S)-2-acetolactate (S2AL) to yield (R)-2,3-dihydroxy-isovalerate. In the isomerase reaction, S2AL is rearranged via a Mg-dependent methyl migration to produce 3-hydroxy-3-methyl-2-ketobutyrate (HMKB). In the reductase reaction, this 2-ketoacid undergoes a metal-dependent reduction by NADPH to yield (R)-2,3-dihydroxy-isovalerate. This is Ketol-acid reductoisomerase (NADP(+)) from Renibacterium salmoninarum (strain ATCC 33209 / DSM 20767 / JCM 11484 / NBRC 15589 / NCIMB 2235).